A 260-amino-acid polypeptide reads, in one-letter code: Voltage-dependent calcium channel gamma-6 subunit (260 aa).

4 consecutive transmembrane segments (helical) span residues leucine 43–valine 63, valine 143–leucine 163, phenylalanine 169–leucine 189, and leucine 221–leucine 241.

This sequence belongs to the PMP-22/EMP/MP20 family. CACNG subfamily. As to quaternary structure, interacts with CACNA1C. Identified in a complex with the L-type calcium channel subunits CACNA1C, CACNA2D1 and either CACNB1 or CACNB2. Detected in heart atrium and ventricle, aorta and skeletal muscle. Detected in heart left ventricle.

The protein resides in the cell membrane. Regulates the activity of L-type calcium channels that contain CACNA1C as pore-forming subunit. In Rattus norvegicus (Rat), this protein is Voltage-dependent calcium channel gamma-6 subunit (Cacng6).